Reading from the N-terminus, the 543-residue chain is Neurofilament light polypeptide (543 aa).

Residue Ser2 is modified to N-acetylserine. Residues 2–92 are head; the sequence is SSFSYEPYYS…LKSIRTQEKA (91 aa). An O-linked (GlcNAc) threonine glycan is attached at Thr21. An Asymmetric dimethylarginine; alternate modification is found at Arg23. Arg23 is subject to Omega-N-methylarginine; alternate. Ser27 carries O-linked (GlcNAc) serine glycosylation. Arg30 bears the Omega-N-methylarginine mark. At Tyr43 the chain carries Phosphotyrosine. 3 positions are modified to phosphoserine: Ser56, Ser67, and Ser103. The region spanning 90–400 is the IF rod domain; it reads EKAQLQDLND…KLLEGEETRL (311 aa). The interval 93 to 124 is coil 1A; the sequence is QLQDLNDRFASFIERVHELEQQNKVLEAELLV. Residues 125 to 137 form a linker 1 region; sequence LRQKHSEPSRFRA. The tract at residues 138–234 is coil 1B; the sequence is LYEQEIRDLR…KVHEEEIAEL (97 aa). The segment at 235 to 252 is linker 12; the sequence is QAQIQYAQISVEMDVTKP. The coil 2A stretch occupies residues 253–271; the sequence is DLSAALKDIRAQYEKLAAK. The linker 2 stretch occupies residues 272 to 280; it reads NMQNAEEWF. The tract at residues 281–396 is coil 2B; the sequence is KSRFTVLTES…AAYRKLLEGE (116 aa). An epitope; recognized by IF-specific monoclonal antibody region spans residues 381–391; that stretch reads ALDIEIAAYRK. The tail, subdomain A stretch occupies residues 397–443; the sequence is ETRLSFTSVGSITSGYSQSSQVFGRSAYGGLQTSSYLMSTRSFPSYY. Positions 397–543 are tail; it reads ETRLSFTSVG…GEEQAAKKKD (147 aa). Residues 444–543 form a tail, subdomain B (acidic) region; it reads TSHVQEEQIE…GEEQAAKKKD (100 aa). Positions 462-543 are disordered; the sequence is KAEEAKDEPP…GEEQAAKKKD (82 aa). The span at 471-525 shows a compositional bias: acidic residues; that stretch reads PSEGEAEEEEKDKEEAEEEEAAEEEEAAKEESEEAKEEEEGGEGEEGEETKEAEE. Residues Ser472 and Ser502 each carry the phosphoserine modification. The residue at position 520 (Thr520) is a Phosphothreonine. Residues 526–543 show a composition bias toward basic and acidic residues; that stretch reads EEKKVEGAGEEQAAKKKD.

It belongs to the intermediate filament family. Forms homodimers (in vitro). Forms heterodimers with NEFH or NEFM; which can further hetero-oligomerize (in vitro). Forms heterodimers with INA (in vitro). Interacts with ARHGEF28. Interacts with TRIM2. Post-translationally, O-glycosylated. Phosphorylated in the head and rod regions by the PKC kinase PKN1, leading to the inhibition of polymerization. In terms of processing, ubiquitinated in the presence of TRIM2 and UBE2D1.

Its subcellular location is the cell projection. It localises to the axon. The protein resides in the cytoplasm. It is found in the cytoskeleton. Neurofilaments usually contain three intermediate filament proteins: NEFL, NEFM, and NEFH which are involved in the maintenance of neuronal caliber. May additionally cooperate with the neuronal intermediate filament proteins PRPH and INA to form neuronal filamentous networks. The sequence is that of Neurofilament light polypeptide (NEFL) from Homo sapiens (Human).